Consider the following 549-residue polypeptide: Probable protein kinase UbiB (549 aa).

Residues 123–501 (DFDETPLASA…QQQAHKSNYM (379 aa)) enclose the Protein kinase domain. Residues 129 to 137 (LASASISQV) and lysine 152 each bind ATP. Aspartate 287 serves as the catalytic Proton acceptor. Helical transmembrane passes span 499 to 516 (NYMLITSAVLLICGTLLF) and 521 to 540 (TLWSPYVCLTSGVLMWFIGW).

This sequence belongs to the ABC1 family. UbiB subfamily.

It localises to the cell inner membrane. The protein operates within cofactor biosynthesis; ubiquinone biosynthesis [regulation]. In terms of biological role, is probably a protein kinase regulator of UbiI activity which is involved in aerobic coenzyme Q (ubiquinone) biosynthesis. The chain is Probable protein kinase UbiB from Shewanella sp. (strain W3-18-1).